Reading from the N-terminus, the 391-residue chain is Tryptophan synthase beta chain (391 aa).

At Lys84 the chain carries N6-(pyridoxal phosphate)lysine.

It belongs to the TrpB family. In terms of assembly, tetramer of two alpha and two beta chains. Pyridoxal 5'-phosphate serves as cofactor.

The enzyme catalyses (1S,2R)-1-C-(indol-3-yl)glycerol 3-phosphate + L-serine = D-glyceraldehyde 3-phosphate + L-tryptophan + H2O. Its pathway is amino-acid biosynthesis; L-tryptophan biosynthesis; L-tryptophan from chorismate: step 5/5. Its function is as follows. The beta subunit is responsible for the synthesis of L-tryptophan from indole and L-serine. The sequence is that of Tryptophan synthase beta chain from Thermoanaerobacter sp. (strain X514).